The sequence spans 374 residues: Lactoyl-CoA dehydratase subunit beta (374 aa).

It belongs to the FldB/FldC dehydratase alpha/beta subunit family. Heterodimer of an alpha (LcdA) and a beta (LcdB) subunit. The cofactor is [4Fe-4S] cluster. Requires FMN as cofactor. Riboflavin is required as a cofactor. Mg(2+) serves as cofactor.

The enzyme catalyses (R)-lactoyl-CoA = acryloyl-CoA + H2O. The catalysed reaction is (2R)-hydroxybutanoyl-CoA = (2E)-butenoyl-CoA + H2O. With respect to regulation, activated by the LcdC protein. In terms of biological role, involved in the acrylate pathway for the conversion of D-lactic acid to propionic acid. Catalyzes the reversible dehydration of Lactoyl-CoA and 2-hydroxybutyroyl-CoA to acryloyl-CoA and crotonyl-CoA, respectively. The protein is Lactoyl-CoA dehydratase subunit beta (lcdB) of Anaerotignum propionicum (Clostridium propionicum).